A 466-amino-acid chain; its full sequence is Signal recognition particle 54 kDa protein (466 aa).

Residues 104-111 (GLQGSGKT), 184-188 (DTAGR), and 242-245 (TKLD) contribute to the GTP site. The segment at 446–466 (QQQGGGGMGGLGGGGGLGPFG) is disordered. Positions 448–466 (QGGGGMGGLGGGGGLGPFG) are enriched in gly residues.

The protein belongs to the GTP-binding SRP family. SRP54 subfamily. As to quaternary structure, part of the signal recognition particle protein translocation system, which is composed of SRP and FtsY. Archaeal SRP consists of a 7S RNA molecule of 300 nucleotides and two protein subunits: SRP54 and SRP19.

The protein resides in the cytoplasm. It catalyses the reaction GTP + H2O = GDP + phosphate + H(+). Functionally, involved in targeting and insertion of nascent membrane proteins into the cytoplasmic membrane. Binds to the hydrophobic signal sequence of the ribosome-nascent chain (RNC) as it emerges from the ribosomes. The SRP-RNC complex is then targeted to the cytoplasmic membrane where it interacts with the SRP receptor FtsY. This chain is Signal recognition particle 54 kDa protein, found in Haloquadratum walsbyi (strain DSM 16790 / HBSQ001).